We begin with the raw amino-acid sequence, 703 residues long: Fanconi-associated nuclease 1 homolog (703 aa).

4 residues coordinate Mn(2+): glutamate 529, aspartate 651, glutamate 666, and valine 667. Positions 597 to 698 (YIREHQRKTF…EVDVEVCHVS (102 aa)) constitute a VRR-NUC domain.

It belongs to the FAN1 family. Requires Mn(2+) as cofactor. It depends on Mg(2+) as a cofactor.

It is found in the nucleus. The enzyme catalyses Hydrolytically removes 5'-nucleotides successively from the 3'-hydroxy termini of 3'-hydroxy-terminated oligonucleotides.. Functionally, nuclease required for the repair of DNA interstrand cross-links (ICL). Acts as a 5'-3' exonuclease that anchors at a cut end of DNA and cleaves DNA successively at every third nucleotide, allowing to excise an ICL from one strand through flanking incisions. The chain is Fanconi-associated nuclease 1 homolog from Schizosaccharomyces pombe (strain 972 / ATCC 24843) (Fission yeast).